The sequence spans 381 residues: MRMLIAGGGTGGHVFPGIALAEEVVGRHPGNDVVFVGTERGLEAKVVPAAGFPIELIDVKGLKGKGILSLLLNLLLVPRALLQSHRILRKWRPDVVVGVGGYASGPVVLVAWLLRIPTAVQEQNAIAGFTNRVLGRFVDAAFTAFPEAARHFAGRKVYQLGNPIRRTLMENYMRPEVKHPRPRMLVFGGSQGAHALNMRVIEALPHLADLREALAVTHQTGARDREQVEKGYRACGFEPDVREFIHDMSAAYAGADLVVCRAGATTLAELTVCKKPAILVPFPAAADNHQVVNARSLVVAGAAVMIEERDLTGELLAAEIRAILTHPERRERMARAAGRLGSPQAAKEIADVCAELVRRRWGSPAGQERPGHGPVRPPDLA.

UDP-N-acetyl-alpha-D-glucosamine-binding positions include 10–12, asparagine 124, arginine 165, serine 190, isoleucine 245, and glutamine 290; that span reads TGG. Residues 361–381 are disordered; it reads WGSPAGQERPGHGPVRPPDLA.

Belongs to the glycosyltransferase 28 family. MurG subfamily.

Its subcellular location is the cell inner membrane. The enzyme catalyses di-trans,octa-cis-undecaprenyl diphospho-N-acetyl-alpha-D-muramoyl-L-alanyl-D-glutamyl-meso-2,6-diaminopimeloyl-D-alanyl-D-alanine + UDP-N-acetyl-alpha-D-glucosamine = di-trans,octa-cis-undecaprenyl diphospho-[N-acetyl-alpha-D-glucosaminyl-(1-&gt;4)]-N-acetyl-alpha-D-muramoyl-L-alanyl-D-glutamyl-meso-2,6-diaminopimeloyl-D-alanyl-D-alanine + UDP + H(+). Its pathway is cell wall biogenesis; peptidoglycan biosynthesis. In terms of biological role, cell wall formation. Catalyzes the transfer of a GlcNAc subunit on undecaprenyl-pyrophosphoryl-MurNAc-pentapeptide (lipid intermediate I) to form undecaprenyl-pyrophosphoryl-MurNAc-(pentapeptide)GlcNAc (lipid intermediate II). The protein is UDP-N-acetylglucosamine--N-acetylmuramyl-(pentapeptide) pyrophosphoryl-undecaprenol N-acetylglucosamine transferase of Anaeromyxobacter sp. (strain Fw109-5).